We begin with the raw amino-acid sequence, 125 residues long: Large ribosomal subunit protein bL17 (125 aa).

The protein belongs to the bacterial ribosomal protein bL17 family. In terms of assembly, part of the 50S ribosomal subunit. Contacts protein L32.

The polypeptide is Large ribosomal subunit protein bL17 (Marinomonas sp. (strain MWYL1)).